Here is a 251-residue protein sequence, read N- to C-terminus: HTH-type transcriptional regulator UlaR (251 aa).

Positions 3 to 58 (EAQRHQILLEMLAQLGFVTVEKVVERLGISPATARRDINKLDESGKLKKVRNGAEA) constitute an HTH deoR-type domain. Positions 20–39 (VTVEKVVERLGISPATARRD) form a DNA-binding region, H-T-H motif.

It is found in the cytoplasm. Its function is as follows. Represses ulaG and the ulaABCDEF operon. In Shigella dysenteriae serotype 1 (strain Sd197), this protein is HTH-type transcriptional regulator UlaR.